Consider the following 469-residue polypeptide: Calcium-binding mitochondrial carrier protein SCaMC-2-B (469 aa).

Residues 1–189 are Mitochondrial intermembrane-facing; the sequence is MLCLCLYVPV…EKNTGMWWRH (189 aa). EF-hand domains follow at residues 47-80, 78-113, and 114-149; these read SYRKWRKKVVKAGDKDLDGQLDFEEFVHYLRDHE, DHEKKLRLVFKSLDKKNDGHIDSQEIMQSLRDLGVH, and ISEEQAEKILKSMDKNGTMTIDWNEWRDYHLLHPAE. Residues Asp-60, Asp-62, Asp-64, Gln-66, and Glu-71 each contribute to the Ca(2+) site. Solcar repeat units follow at residues 184-270, 278-363, and 375-463; these read GMWW…IKRL, LGIL…LKNS, and PGVF…LKIT. The helical transmembrane segment at 190 to 207 threads the bilayer; it reads LVAGGGAGAVSRTCTAPL. Over 208–244 the chain is Mitochondrial matrix; that stretch reads DRLKVLMQVHATRSNSMGIAGGFTQMIREGGLRSLWR. Residues 245–264 traverse the membrane as a helical segment; that stretch reads GNGINVLKIAPESAIKFMAY. Residues 265 to 287 are Mitochondrial intermembrane-facing; that stretch reads EQIKRLIGSNQETLGILERLVSG. A helical membrane pass occupies residues 288–301; that stretch reads SLAGAIAQSSIYPM. Residues 302–337 lie on the Mitochondrial matrix side of the membrane; that stretch reads EVLKTRLALGRTGQYSGIADCAKHIFKKEGMTAFYK. The helical transmembrane segment at 338-357 threads the bilayer; sequence GYIPNMLGIIPYAGIDLAVY. Residues 358–380 lie on the Mitochondrial intermembrane side of the membrane; sequence ETLKNSWLQRFATDSADPGVFVL. The chain crosses the membrane as a helical span at residues 381–398; that stretch reads LACGTMSSTCGQLASYPL. At 399 to 437 the chain is on the mitochondrial matrix side; it reads ALVRTRMQAQASQEGSPQMTMSGLFRHIVRTEGAIGLYR. Residues 438-457 form a helical membrane-spanning segment; it reads GLAPNFMKVIPAVSISYVVY. Over 458–469 the chain is Mitochondrial intermembrane; sequence ENLKITLGVQSR.

It belongs to the mitochondrial carrier (TC 2.A.29) family.

It is found in the mitochondrion inner membrane. Calcium-dependent mitochondrial solute carrier. The protein is Calcium-binding mitochondrial carrier protein SCaMC-2-B (slc25a25b) of Danio rerio (Zebrafish).